Here is a 153-residue protein sequence, read N- to C-terminus: Xanthine-guanine phosphoribosyltransferase (153 aa).

Residues 37-38, R69, and 88-96 each bind 5-phospho-alpha-D-ribose 1-diphosphate; these read RG and DDLVDTGGT. R69 is a binding site for GMP. D89 contacts Mg(2+). 2 residues coordinate guanine: D92 and I135. Xanthine is bound by residues D92 and I135. GMP contacts are provided by residues 92–96 and 134–135; these read DTGGT and WI.

It belongs to the purine/pyrimidine phosphoribosyltransferase family. XGPT subfamily. As to quaternary structure, homotetramer. Mg(2+) serves as cofactor.

The protein localises to the cell inner membrane. The enzyme catalyses GMP + diphosphate = guanine + 5-phospho-alpha-D-ribose 1-diphosphate. It carries out the reaction XMP + diphosphate = xanthine + 5-phospho-alpha-D-ribose 1-diphosphate. It catalyses the reaction IMP + diphosphate = hypoxanthine + 5-phospho-alpha-D-ribose 1-diphosphate. It functions in the pathway purine metabolism; GMP biosynthesis via salvage pathway; GMP from guanine: step 1/1. The protein operates within purine metabolism; XMP biosynthesis via salvage pathway; XMP from xanthine: step 1/1. Purine salvage pathway enzyme that catalyzes the transfer of the ribosyl-5-phosphate group from 5-phospho-alpha-D-ribose 1-diphosphate (PRPP) to the N9 position of the 6-oxopurines guanine and xanthine to form the corresponding ribonucleotides GMP (guanosine 5'-monophosphate) and XMP (xanthosine 5'-monophosphate), with the release of PPi. To a lesser extent, also acts on hypoxanthine. The sequence is that of Xanthine-guanine phosphoribosyltransferase from Photorhabdus laumondii subsp. laumondii (strain DSM 15139 / CIP 105565 / TT01) (Photorhabdus luminescens subsp. laumondii).